We begin with the raw amino-acid sequence, 328 residues long: tRNA dimethylallyltransferase (328 aa).

19–26 (GPTASGKT) is a binding site for ATP. Position 21–26 (21–26 (TASGKT)) interacts with substrate. Interaction with substrate tRNA stretches follow at residues 50-53 (DSAL), 174-178 (QRIQR), and 257-262 (RCVGYR).

It belongs to the IPP transferase family. Monomer. The cofactor is Mg(2+).

The catalysed reaction is adenosine(37) in tRNA + dimethylallyl diphosphate = N(6)-dimethylallyladenosine(37) in tRNA + diphosphate. In terms of biological role, catalyzes the transfer of a dimethylallyl group onto the adenine at position 37 in tRNAs that read codons beginning with uridine, leading to the formation of N6-(dimethylallyl)adenosine (i(6)A). The polypeptide is tRNA dimethylallyltransferase (Leptothrix cholodnii (strain ATCC 51168 / LMG 8142 / SP-6) (Leptothrix discophora (strain SP-6))).